The following is a 91-amino-acid chain: PqqA binding protein (91 aa).

This sequence belongs to the PqqD family. Monomer. Interacts with PqqE.

The protein operates within cofactor biosynthesis; pyrroloquinoline quinone biosynthesis. In terms of biological role, functions as a PqqA binding protein and presents PqqA to PqqE, in the pyrroloquinoline quinone (PQQ) biosynthetic pathway. The sequence is that of PqqA binding protein from Pseudomonas putida (strain W619).